We begin with the raw amino-acid sequence, 61 residues long: Large ribosomal subunit protein uL29 (61 aa).

This sequence belongs to the universal ribosomal protein uL29 family.

This chain is Large ribosomal subunit protein uL29, found in Stenotrophomonas maltophilia (strain K279a).